Here is a 311-residue protein sequence, read N- to C-terminus: Probable manganese-dependent inorganic pyrophosphatase (311 aa).

6 residues coordinate Mn(2+): H9, D13, D15, D77, H99, and D151.

Belongs to the PPase class C family. It depends on Mn(2+) as a cofactor.

The protein resides in the cytoplasm. The enzyme catalyses diphosphate + H2O = 2 phosphate + H(+). The protein is Probable manganese-dependent inorganic pyrophosphatase of Streptococcus agalactiae serotype III (strain NEM316).